Here is a 64-residue protein sequence, read N- to C-terminus: Translation machinery-associated protein 7 homolog (64 aa).

A disordered region spans residues 1 to 64 (MSGREGGKKK…QGGIKKSGKK (64 aa)). Residues 21-50 (EMDEDTAAFKAKQKEQQKALEAAKQKATKG) adopt a coiled-coil conformation. Basic and acidic residues predominate over residues 32–44 (KQKEQQKALEAAK).

It belongs to the TMA7 family.

The sequence is that of Translation machinery-associated protein 7 homolog from Anopheles gambiae (African malaria mosquito).